A 388-amino-acid polypeptide reads, in one-letter code: Chorismate synthase (388 aa).

NADP(+)-binding residues include arginine 39 and arginine 45. FMN-binding positions include 132 to 134 (RSS), 251 to 252 (NA), glycine 296, 311 to 315 (KPIPT), and arginine 337.

This sequence belongs to the chorismate synthase family. In terms of assembly, homotetramer. FMNH2 is required as a cofactor.

It carries out the reaction 5-O-(1-carboxyvinyl)-3-phosphoshikimate = chorismate + phosphate. It functions in the pathway metabolic intermediate biosynthesis; chorismate biosynthesis; chorismate from D-erythrose 4-phosphate and phosphoenolpyruvate: step 7/7. Functionally, catalyzes the anti-1,4-elimination of the C-3 phosphate and the C-6 proR hydrogen from 5-enolpyruvylshikimate-3-phosphate (EPSP) to yield chorismate, which is the branch point compound that serves as the starting substrate for the three terminal pathways of aromatic amino acid biosynthesis. This reaction introduces a second double bond into the aromatic ring system. The polypeptide is Chorismate synthase (Staphylococcus carnosus (strain TM300)).